Here is a 157-residue protein sequence, read N- to C-terminus: Transcription elongation factor GreA (157 aa).

A coiled-coil region spans residues 9–30; that stretch reads LEGAQQLKEELKRRKTTDRKRI.

Belongs to the GreA/GreB family.

Necessary for efficient RNA polymerase transcription elongation past template-encoded arresting sites. The arresting sites in DNA have the property of trapping a certain fraction of elongating RNA polymerases that pass through, resulting in locked ternary complexes. Cleavage of the nascent transcript by cleavage factors such as GreA or GreB allows the resumption of elongation from the new 3'terminus. GreA releases sequences of 2 to 3 nucleotides. The chain is Transcription elongation factor GreA from Magnetococcus marinus (strain ATCC BAA-1437 / JCM 17883 / MC-1).